Here is a 155-residue protein sequence, read N- to C-terminus: MPILAPAELLASLSRDQRLLGLDLGSKTIGLALSDVSRTIATPFDTIRRTKFTQDAELLLAVVDKQGVGGLVLGLPVEMDGFEGPRCQSVRSFAANLARLRDMPIAYWDERLSTSAVTRTLLEADSSRKRRAEVVDKMAAAYILQGLLDNRSGFA.

This sequence belongs to the YqgF nuclease family.

It localises to the cytoplasm. Functionally, could be a nuclease involved in processing of the 5'-end of pre-16S rRNA. This is Putative pre-16S rRNA nuclease from Paramagnetospirillum magneticum (strain ATCC 700264 / AMB-1) (Magnetospirillum magneticum).